We begin with the raw amino-acid sequence, 951 residues long: Multiple C2 and transmembrane domain-containing protein 1 (951 aa).

4 disordered regions span residues 29–79, 92–117, 129–198, and 210–231; these read LGVG…RWSG, SSSQ…AEQG, LPVA…QKSS, and LEPA…ALQK. Residues 31–43 show a composition bias toward gly residues; sequence VGKGKGGGGGRAG. The segment covering 147-168 has biased composition (low complexity); sequence PGGRSPDSAPSSSSASSSLSSS. Basic and acidic residues predominate over residues 174-184; it reads RGDRVRDESTR. Residues 219–228 show a composition bias toward low complexity; it reads PARGPAEPQA. 3 C2 domains span residues 240–358, 404–521, and 555–676; these read KIST…DVTL, QTQS…KLEL, and QKER…AYVL. Residues Asp275, Asp281, Asp328, Asp330, Asp336, Asp438, Asp444, Asp491, Asp493, Asp499, Asp594, Asp600, Asp646, Asp648, and Asp654 each coordinate Ca(2+). Helical transmembrane passes span 763–783 and 866–886; these read FVLF…LLLL and PFLS…LYFI.

It belongs to the MCTP family. The cofactor is Ca(2+).

It localises to the cytoplasmic vesicle. It is found in the secretory vesicle. The protein localises to the synaptic vesicle membrane. The protein resides in the recycling endosome. Its subcellular location is the endoplasmic reticulum membrane. Functionally, calcium sensor which is essential for the stabilization of normal baseline neurotransmitter release and for the induction and long-term maintenance of presynaptic homeostatic plasticity. The chain is Multiple C2 and transmembrane domain-containing protein 1 from Mus musculus (Mouse).